The chain runs to 188 residues: Large ribosomal subunit protein uL10 (188 aa).

Belongs to the universal ribosomal protein uL10 family. As to quaternary structure, part of the ribosomal stalk of the 50S ribosomal subunit. The N-terminus interacts with L11 and the large rRNA to form the base of the stalk. The C-terminus forms an elongated spine to which L12 dimers bind in a sequential fashion forming a multimeric L10(L12)X complex.

Functionally, forms part of the ribosomal stalk, playing a central role in the interaction of the ribosome with GTP-bound translation factors. The chain is Large ribosomal subunit protein uL10 from Crocosphaera subtropica (strain ATCC 51142 / BH68) (Cyanothece sp. (strain ATCC 51142)).